The primary structure comprises 362 residues: Bifunctional chorismate mutase/prephenate dehydratase (362 aa).

Residues 3–91 (QTIDELLIPH…ECLAVERPLT (89 aa)) form the Chorismate mutase domain. Substrate contacts are provided by Arg13, Arg30, Lys41, and Glu52. A Prephenate dehydratase domain is found at 92 to 269 (IAYLGPQGTF…NTTRFLVMGH (178 aa)). The 76-residue stretch at 281–356 (SLAVSAPNRA…RASFVKAIGS (76 aa)) folds into the ACT domain.

The protein localises to the cytoplasm. It catalyses the reaction chorismate = prephenate. It carries out the reaction prephenate + H(+) = 3-phenylpyruvate + CO2 + H2O. Its pathway is amino-acid biosynthesis; L-phenylalanine biosynthesis; phenylpyruvate from prephenate: step 1/1. It participates in metabolic intermediate biosynthesis; prephenate biosynthesis; prephenate from chorismate: step 1/1. Functionally, catalyzes the Claisen rearrangement of chorismate to prephenate and the decarboxylation/dehydration of prephenate to phenylpyruvate. The polypeptide is Bifunctional chorismate mutase/prephenate dehydratase (pheA) (Neisseria gonorrhoeae (strain ATCC 700825 / FA 1090)).